Here is a 791-residue protein sequence, read N- to C-terminus: Phenylalanine--tRNA ligase beta subunit (791 aa).

A tRNA-binding domain is found at 39–148 (AADFSGVVVA…ADAPVGADIR (110 aa)). The 76-residue stretch at 401–476 (PLRAPVRLRE…RVYGYDAIPR (76 aa)) folds into the B5 domain. 4 residues coordinate Mg(2+): D454, D460, E463, and E464. The FDX-ACB domain occupies 697–790 (SRFPLVRRDL…LAADFGAKLR (94 aa)).

Belongs to the phenylalanyl-tRNA synthetase beta subunit family. Type 1 subfamily. In terms of assembly, tetramer of two alpha and two beta subunits. Mg(2+) serves as cofactor.

The protein localises to the cytoplasm. The enzyme catalyses tRNA(Phe) + L-phenylalanine + ATP = L-phenylalanyl-tRNA(Phe) + AMP + diphosphate + H(+). In Methylococcus capsulatus (strain ATCC 33009 / NCIMB 11132 / Bath), this protein is Phenylalanine--tRNA ligase beta subunit.